Here is a 179-residue protein sequence, read N- to C-terminus: Orotate phosphoribosyltransferase (179 aa).

5-phospho-alpha-D-ribose 1-diphosphate contacts are provided by residues R24, R89, K90, K93, and 115 to 123 (EDVITTGGA). 2 residues coordinate orotate: T119 and R147.

This sequence belongs to the purine/pyrimidine phosphoribosyltransferase family. PyrE subfamily. As to quaternary structure, homodimer. The cofactor is Mg(2+).

It carries out the reaction orotidine 5'-phosphate + diphosphate = orotate + 5-phospho-alpha-D-ribose 1-diphosphate. It participates in pyrimidine metabolism; UMP biosynthesis via de novo pathway; UMP from orotate: step 1/2. In terms of biological role, catalyzes the transfer of a ribosyl phosphate group from 5-phosphoribose 1-diphosphate to orotate, leading to the formation of orotidine monophosphate (OMP). In Nocardioides sp. (strain ATCC BAA-499 / JS614), this protein is Orotate phosphoribosyltransferase.